A 307-amino-acid chain; its full sequence is Tropinone reductase homolog At2g29340 (307 aa).

An NADP(+)-binding site is contributed by 13–37 (LVTGGASGIGYAIVEELAGFGARIH). Residue serine 146 coordinates substrate. Tyrosine 159 acts as the Proton acceptor in catalysis.

It belongs to the short-chain dehydrogenases/reductases (SDR) family. SDR65C subfamily.

In Arabidopsis thaliana (Mouse-ear cress), this protein is Tropinone reductase homolog At2g29340.